The following is a 215-amino-acid chain: Small ribosomal subunit protein uS2 (215 aa).

This sequence belongs to the universal ribosomal protein uS2 family.

The polypeptide is Small ribosomal subunit protein uS2 (Caldivirga maquilingensis (strain ATCC 700844 / DSM 13496 / JCM 10307 / IC-167)).